A 146-amino-acid chain; its full sequence is uncharacterized protein (146 aa).

Residues 1-17 (MKRLLILTALLPFVGFA) form the signal peptide. 2 disordered regions span residues 27–54 (NQPG…KGML) and 70–146 (ENQI…TIGP). Low complexity predominate over residues 32 to 54 (QIPSQQRMQTQMQTQQIQQKGML). The segment covering 77–118 (SQRVLQSQPGERNPARQQMLPNTNGGMLNSNRNPDSSLNQQH) has biased composition (polar residues).

This is an uncharacterized protein from Escherichia coli (strain K12).